The following is a 227-amino-acid chain: uncharacterized protein (227 aa).

The N-terminal stretch at 1-23 is a signal peptide; the sequence is MKKLTVTFLTFISIFFAATAAFA.

This is an uncharacterized protein from Coxiella burnetii (strain RSA 493 / Nine Mile phase I).